The primary structure comprises 159 residues: Phosphopantetheine adenylyltransferase (159 aa).

Thr10 serves as a coordination point for substrate. ATP contacts are provided by residues 10–11 (TF) and His18. Substrate is bound by residues Lys42, Met74, and Arg88. Residues 89–91 (GLR), Glu99, and 124–130 (WSFISSS) contribute to the ATP site.

This sequence belongs to the bacterial CoaD family. As to quaternary structure, homohexamer. Mg(2+) serves as cofactor.

The protein resides in the cytoplasm. It carries out the reaction (R)-4'-phosphopantetheine + ATP + H(+) = 3'-dephospho-CoA + diphosphate. It participates in cofactor biosynthesis; coenzyme A biosynthesis; CoA from (R)-pantothenate: step 4/5. Its function is as follows. Reversibly transfers an adenylyl group from ATP to 4'-phosphopantetheine, yielding dephospho-CoA (dPCoA) and pyrophosphate. The polypeptide is Phosphopantetheine adenylyltransferase (Salmonella typhimurium (strain LT2 / SGSC1412 / ATCC 700720)).